A 242-amino-acid chain; its full sequence is MSKRRIAPLTFLRRLLLRILAALAVFWGGGIALFSVVPVPFSAVMAERQISAWLGGEFGYVAHSDWVSMADISPWMGLAVITAEDQKFPEHWGFDVPAIEKALAHNERNESRIRGASTLSQQTAKNLFLWDGRSWVRKGLEAGLTLGIETVWSKKRILTVYLNIAEFGDGIFGVEAAAQRYFHKPASRLSVSEAALLAAVLPNPLRYKANAPSGYVRSRQAWIMRQMRQLGGESFMTRNQLN.

Residues 19–39 traverse the membrane as a helical segment; it reads ILAALAVFWGGGIALFSVVPV.

The protein belongs to the glycosyltransferase 51 family.

The protein resides in the cell inner membrane. The enzyme catalyses [GlcNAc-(1-&gt;4)-Mur2Ac(oyl-L-Ala-gamma-D-Glu-L-Lys-D-Ala-D-Ala)](n)-di-trans,octa-cis-undecaprenyl diphosphate + beta-D-GlcNAc-(1-&gt;4)-Mur2Ac(oyl-L-Ala-gamma-D-Glu-L-Lys-D-Ala-D-Ala)-di-trans,octa-cis-undecaprenyl diphosphate = [GlcNAc-(1-&gt;4)-Mur2Ac(oyl-L-Ala-gamma-D-Glu-L-Lys-D-Ala-D-Ala)](n+1)-di-trans,octa-cis-undecaprenyl diphosphate + di-trans,octa-cis-undecaprenyl diphosphate + H(+). Its pathway is cell wall biogenesis; peptidoglycan biosynthesis. In terms of biological role, peptidoglycan polymerase that catalyzes glycan chain elongation from lipid-linked precursors. The sequence is that of Biosynthetic peptidoglycan transglycosylase from Salmonella paratyphi A (strain ATCC 9150 / SARB42).